A 149-amino-acid polypeptide reads, in one-letter code: Transcriptional repressor NrdR (149 aa).

The segment at 3-34 (CPFCNADDTKVIDSRLVADGHQVRRRRECLVC) is a zinc-finger region. The 91-residue stretch at 49–139 (PRVIKSNGVR…VYRSFEDIRE (91 aa)) folds into the ATP-cone domain.

This sequence belongs to the NrdR family. Zn(2+) is required as a cofactor.

Its function is as follows. Negatively regulates transcription of bacterial ribonucleotide reductase nrd genes and operons by binding to NrdR-boxes. This chain is Transcriptional repressor NrdR, found in Tolumonas auensis (strain DSM 9187 / NBRC 110442 / TA 4).